The sequence spans 91 residues: Large ribosomal subunit protein eL34 (91 aa).

Residues 48-69 form a disordered region; it reads RGRPVEMRKLPKTKKRPERPMP.

This sequence belongs to the eukaryotic ribosomal protein eL34 family.

The chain is Large ribosomal subunit protein eL34 (rpl34e) from Pyrococcus horikoshii (strain ATCC 700860 / DSM 12428 / JCM 9974 / NBRC 100139 / OT-3).